The following is a 134-amino-acid chain: Ribonuclease P protein component (134 aa).

The protein belongs to the RnpA family. As to quaternary structure, consists of a catalytic RNA component (M1 or rnpB) and a protein subunit.

The catalysed reaction is Endonucleolytic cleavage of RNA, removing 5'-extranucleotides from tRNA precursor.. Its function is as follows. RNaseP catalyzes the removal of the 5'-leader sequence from pre-tRNA to produce the mature 5'-terminus. It can also cleave other RNA substrates such as 4.5S RNA. The protein component plays an auxiliary but essential role in vivo by binding to the 5'-leader sequence and broadening the substrate specificity of the ribozyme. This chain is Ribonuclease P protein component, found in Pseudomonas putida (strain ATCC 700007 / DSM 6899 / JCM 31910 / BCRC 17059 / LMG 24140 / F1).